A 99-amino-acid chain; its full sequence is Large ribosomal subunit protein bL28 (99 aa).

The protein belongs to the bacterial ribosomal protein bL28 family.

In Rhizobium etli (strain CIAT 652), this protein is Large ribosomal subunit protein bL28.